The primary structure comprises 271 residues: Small ribosomal subunit protein uS2 (271 aa).

Belongs to the universal ribosomal protein uS2 family.

The polypeptide is Small ribosomal subunit protein uS2 (Wolbachia pipientis subsp. Culex pipiens (strain wPip)).